Reading from the N-terminus, the 260-residue chain is Putative ABC transporter ATP-binding protein PYRAB01300 (260 aa).

An ABC transporter domain is found at 2-234 (IEFKDVWFWY…DLRNFSLVEP (233 aa)). 34–41 (GPNGSGKT) is a binding site for ATP.

Belongs to the ABC transporter superfamily.

Its subcellular location is the cell membrane. In terms of biological role, probably part of an ABC transporter complex. Responsible for energy coupling to the transport system. The polypeptide is Putative ABC transporter ATP-binding protein PYRAB01300 (Pyrococcus abyssi (strain GE5 / Orsay)).